The chain runs to 318 residues: Ribosomal RNA small subunit methyltransferase A (318 aa).

Positions 40, 42, 67, 88, 118, and 137 each coordinate S-adenosyl-L-methionine. A compositionally biased stretch (basic and acidic residues) spans 296-305 (ADRGGSDREG). Positions 296-318 (ADRGGSDREGTSPPTAGQGAPAC) are disordered.

Belongs to the class I-like SAM-binding methyltransferase superfamily. rRNA adenine N(6)-methyltransferase family. RsmA subfamily.

It is found in the cytoplasm. It catalyses the reaction adenosine(1518)/adenosine(1519) in 16S rRNA + 4 S-adenosyl-L-methionine = N(6)-dimethyladenosine(1518)/N(6)-dimethyladenosine(1519) in 16S rRNA + 4 S-adenosyl-L-homocysteine + 4 H(+). Its function is as follows. Specifically dimethylates two adjacent adenosines (A1518 and A1519) in the loop of a conserved hairpin near the 3'-end of 16S rRNA in the 30S particle. May play a critical role in biogenesis of 30S subunits. In Mycobacterium avium (strain 104), this protein is Ribosomal RNA small subunit methyltransferase A.